The chain runs to 318 residues: MLHLIYISIIVVLIIILISYTHKPKYFRITAPRSVTLFHGIHPLNPKNYKTFSEEFETILNNAIEDGDFKGQLTEPCSYALRGGKYIRPIILMEIVRACQLQHSFGAPIYPAEAALAVEYFHVASLIIDDMPSFDNDVKRRNKDTVWARFGVAKAQMSALALTMQGFQNICRQIDWIKEHCPRFPDPNQLGALLCTFVSHSLNSAGSGQLVDTPEKTIPFFKIAFIMGWVLGTGTIEDIGVIERAAHCFGNAFQLADDIKDHDTDTGGNYAKIHGKRKTFDVVAQSLQECKKILQGKKIYTSIWNEIFQKVINVALGT.

A helical membrane pass occupies residues 1–21 (MLHLIYISIIVVLIIILISYT). Positions 85, 88, and 122 each coordinate isopentenyl diphosphate. Residues Asp-129 and Asp-135 each coordinate Mg(2+). Residue Arg-140 participates in dimethylallyl diphosphate binding. Position 141 (Arg-141) interacts with isopentenyl diphosphate. Dimethylallyl diphosphate is bound by residues Lys-216, Thr-217, and Gln-254.

This sequence belongs to the FPP/GGPP synthase family. Asfivirus trans-prenyltransferase subfamily. Mg(2+) is required as a cofactor.

The protein resides in the host endoplasmic reticulum. It is found in the host membrane. The enzyme catalyses isopentenyl diphosphate + dimethylallyl diphosphate = (2E)-geranyl diphosphate + diphosphate. The catalysed reaction is isopentenyl diphosphate + (2E)-geranyl diphosphate = (2E,6E)-farnesyl diphosphate + diphosphate. It carries out the reaction isopentenyl diphosphate + (2E,6E)-farnesyl diphosphate = (2E,6E,10E)-geranylgeranyl diphosphate + diphosphate. It catalyses the reaction isopentenyl diphosphate + (2E,6E,10E)-geranylgeranyl diphosphate = (2E,6E,10E,14E)-geranylfarnesyl diphosphate + diphosphate. It participates in isoprenoid biosynthesis; farnesyl diphosphate biosynthesis; farnesyl diphosphate from geranyl diphosphate and isopentenyl diphosphate: step 1/1. The protein operates within isoprenoid biosynthesis; geranyl diphosphate biosynthesis; geranyl diphosphate from dimethylallyl diphosphate and isopentenyl diphosphate: step 1/1. Its pathway is isoprenoid biosynthesis; geranylgeranyl diphosphate biosynthesis; geranylgeranyl diphosphate from farnesyl diphosphate and isopentenyl diphosphate: step 1/1. Trans-prenyltransferase that catalyzes the sequential condensation of isopentenyl diphosphate (IPP) with different allylic diphosphates, such as dimethylallyl diphosphate (DMAPP), geranyl diphosphate (GPP), farnesyl diphosphate (FPP) and geranylgeranyl diphosphate (GGPP), farnesyl diphosphate being the best allylic substrate. The polypeptide is Trans-prenyltransferase (African swine fever virus (isolate Tick/Malawi/Lil 20-1/1983) (ASFV)).